The primary structure comprises 115 residues: NADH-ubiquinone oxidoreductase chain 3 (115 aa).

3 helical membrane-spanning segments follow: residues Leu-3–Trp-23, Phe-55–Leu-75, and Leu-84–Tyr-104.

The protein belongs to the complex I subunit 3 family. Core subunit of respiratory chain NADH dehydrogenase (Complex I) which is composed of 45 different subunits. Interacts with TMEM186. Interacts with TMEM242.

The protein localises to the mitochondrion inner membrane. It carries out the reaction a ubiquinone + NADH + 5 H(+)(in) = a ubiquinol + NAD(+) + 4 H(+)(out). Its function is as follows. Core subunit of the mitochondrial membrane respiratory chain NADH dehydrogenase (Complex I) which catalyzes electron transfer from NADH through the respiratory chain, using ubiquinone as an electron acceptor. Essential for the catalytic activity of complex I. This is NADH-ubiquinone oxidoreductase chain 3 from Equus asinus (Donkey).